The chain runs to 422 residues: Serine protease HTRA2, mitochondrial (422 aa).

A mitochondrion-targeting transit peptide spans 1-17 (MALRGSHRLQVILKRCI). Residues 18–74 (ASPLFHSHAPNRRSSQPAIKGGEPNSNGNSGHDQQNGERKGKGWRRLVSFFVPFSLG) constitute a propeptide that is removed on maturation. A disordered region spans residues 24-56 (SHAPNRRSSQPAIKGGEPNSNGNSGHDQQNGER). The span at 41-51 (PNSNGNSGHDQ) shows a compositional bias: polar residues. The helical transmembrane segment at 64–82 (LVSFFVPFSLGAVVSAAVI) threads the bilayer. 2 short sequence motifs (IAP-binding) span residues 75 to 78 (AVVS) and 94 to 97 (SKMT). The serine protease stretch occupies residues 139 to 302 (SNGSGFIIEQ…IPIDYVKVFL (164 aa)). Catalysis depends on charge relay system residues His-157, Asp-189, and Ser-266. Residues 325 to 410 (MGITMLTLTP…NLDIVILRGV (86 aa)) form the PDZ domain.

Belongs to the peptidase S1C family. As to quaternary structure, interacts with th/DIAP1 (via BIR 2 domain).

It localises to the mitochondrion intermembrane space. Its subcellular location is the mitochondrion membrane. The catalysed reaction is Cleavage of non-polar aliphatic amino-acids at the P1 position, with a preference for Val, Ile and Met. At the P2 and P3 positions, Arg is selected most strongly with a secondary preference for other hydrophilic residues.. Serine protease that shows proteolytic activity against a non-specific substrate beta-casein. Promotes or induces cell death either by direct binding to and inhibition of BIRC proteins (also called inhibitor of apoptosis proteins, IAPs), leading to an increase in caspase activity, or by a BIRC inhibition-independent, caspase-independent and serine protease activity-dependent mechanism. Can antagonize antiapoptotic activity of th/Diap1 by directly inducing the degradation of th/Diap1. The polypeptide is Serine protease HTRA2, mitochondrial (Drosophila erecta (Fruit fly)).